Consider the following 255-residue polypeptide: Trypsin alpha-4 (255 aa).

Positions 1 to 16 (MLKFVVLLCAISCALG) are cleaved as a signal peptide. Residues 17–30 (AAVPEGMVPQLDGR) constitute a propeptide, activation peptide. The region spanning 31–253 (IVGGVATTIS…LRTWVVSAAS (223 aa)) is the Peptidase S1 domain. A disulfide bridge links cysteine 56 with cysteine 72. Active-site charge relay system residues include histidine 71 and aspartate 116. Cystine bridges form between cysteine 179-cysteine 196 and cysteine 205-cysteine 229. Catalysis depends on serine 209, which acts as the Charge relay system.

Belongs to the peptidase S1 family.

It is found in the secreted. The protein localises to the extracellular space. The enzyme catalyses Preferential cleavage: Arg-|-Xaa, Lys-|-Xaa.. This is Trypsin alpha-4 from Lucilia cuprina (Green bottle fly).